The primary structure comprises 150 residues: Urease accessory protein UreE (150 aa).

The protein belongs to the UreE family.

It is found in the cytoplasm. Involved in urease metallocenter assembly. Binds nickel. Probably functions as a nickel donor during metallocenter assembly. The protein is Urease accessory protein UreE of Staphylococcus aureus (strain MRSA252).